Reading from the N-terminus, the 535-residue chain is CTP synthase (535 aa).

The interval 1 to 267 (MTKYIFVTGG…DQIVCDHLKL (267 aa)) is amidoligase domain. Ser-13 is a CTP binding site. Position 13 (Ser-13) interacts with UTP. 14 to 19 (SLGKGI) contributes to the ATP binding site. Residue Tyr-54 participates in L-glutamine binding. An ATP-binding site is contributed by Asp-71. Asp-71 and Glu-141 together coordinate Mg(2+). Residues 148-150 (DIE), 188-193 (KTKPTQ), and Lys-224 contribute to the CTP site. Residues 188 to 193 (KTKPTQ) and Lys-224 contribute to the UTP site. 240–242 (RDA) is a binding site for ATP. In terms of domain architecture, Glutamine amidotransferase type-1 spans 292 to 534 (KIALVGKYVE…VRASITNKES (243 aa)). Gly-354 provides a ligand contact to L-glutamine. Cys-381 serves as the catalytic Nucleophile; for glutamine hydrolysis. Residues 382–385 (LGMQ), Glu-405, and Arg-462 each bind L-glutamine. Catalysis depends on residues His-507 and Glu-509.

This sequence belongs to the CTP synthase family. Homotetramer.

It carries out the reaction UTP + L-glutamine + ATP + H2O = CTP + L-glutamate + ADP + phosphate + 2 H(+). The enzyme catalyses L-glutamine + H2O = L-glutamate + NH4(+). It catalyses the reaction UTP + NH4(+) + ATP = CTP + ADP + phosphate + 2 H(+). It participates in pyrimidine metabolism; CTP biosynthesis via de novo pathway; CTP from UDP: step 2/2. Its activity is regulated as follows. Allosterically activated by GTP, when glutamine is the substrate; GTP has no effect on the reaction when ammonia is the substrate. The allosteric effector GTP functions by stabilizing the protein conformation that binds the tetrahedral intermediate(s) formed during glutamine hydrolysis. Inhibited by the product CTP, via allosteric rather than competitive inhibition. Catalyzes the ATP-dependent amination of UTP to CTP with either L-glutamine or ammonia as the source of nitrogen. Regulates intracellular CTP levels through interactions with the four ribonucleotide triphosphates. This chain is CTP synthase, found in Bacillus cereus (strain AH820).